We begin with the raw amino-acid sequence, 185 residues long: Elongation factor P (185 aa).

This sequence belongs to the elongation factor P family.

Its subcellular location is the cytoplasm. The protein operates within protein biosynthesis; polypeptide chain elongation. Involved in peptide bond synthesis. Stimulates efficient translation and peptide-bond synthesis on native or reconstituted 70S ribosomes in vitro. Probably functions indirectly by altering the affinity of the ribosome for aminoacyl-tRNA, thus increasing their reactivity as acceptors for peptidyl transferase. This is Elongation factor P from Synechococcus sp. (strain JA-2-3B'a(2-13)) (Cyanobacteria bacterium Yellowstone B-Prime).